The following is a 365-amino-acid chain: Decapping nuclease RAI1 (365 aa).

Residue Glu165 participates in a divalent metal cation binding. Residues Cys197 and Glu214 each coordinate substrate. Residues Asp216, Glu234, and Leu235 each coordinate a divalent metal cation. Substrate contacts are provided by Lys236 and Gln260.

It belongs to the DXO/Dom3Z family. As to quaternary structure, interacts with rat1; the interaction is direct, stabilizes rat1 protein structure and stimulates its exoribonuclease activity. The interaction also stimulates rai1 pyrophosphohydrolase activity, probably by recruiting it to mRNA substrates. It depends on a divalent metal cation as a cofactor.

The protein resides in the nucleus. It carries out the reaction a 5'-end NAD(+)-phospho-ribonucleoside in mRNA + H2O = a 5'-end phospho-ribonucleoside in mRNA + NAD(+) + H(+). The catalysed reaction is a 5'-end (N(7)-methyl 5'-triphosphoguanosine)-ribonucleoside-ribonucleotide in mRNA + H2O = a (N(7)-methyl 5'-triphosphoguanosine)-nucleoside + a 5'-end phospho-ribonucleoside in mRNA + H(+). It catalyses the reaction a 5'-end triphospho-ribonucleoside in mRNA + H2O = a 5'-end phospho-ribonucleoside in mRNA + diphosphate + H(+). Functionally, decapping enzyme for NAD-capped RNAs: specifically hydrolyzes the nicotinamide adenine dinucleotide (NAD) cap from a subset of RNAs by removing the entire NAD moiety from the 5'-end of an NAD-capped RNA. The NAD-cap is present at the 5'-end of some RNAs and snoRNAs. In contrast to the canonical 5'-end N7 methylguanosine (m7G) cap, the NAD cap promotes mRNA decay. Also acts as a non-canonical decapping enzyme that removes the entire cap structure of m7G capped or incompletely capped RNAs. Has decapping activity toward incomplete 5'-end m7G cap mRNAs such as unmethylated 5'-end-capped RNA (cap0), while it has no activity toward 2'-O-ribose methylated m7G cap (cap1). Also possesses RNA 5'-pyrophosphohydrolase activity by hydrolyzing the 5'-end triphosphate to release pyrophosphates. Stimulates exoribonuclease activity of Rat1, allowing it to degrade RNAs with stable secondary structure more effectively. The polypeptide is Decapping nuclease RAI1 (rai1) (Aspergillus fumigatus (strain ATCC MYA-4609 / CBS 101355 / FGSC A1100 / Af293) (Neosartorya fumigata)).